We begin with the raw amino-acid sequence, 658 residues long: ATP-dependent RNA helicase MSS116, mitochondrial (658 aa).

Residues Met1–Ser35 constitute a mitochondrion transit peptide. Residues His40 to Ser79 show a composition bias toward basic and acidic residues. The tract at residues His40–Leu104 is disordered. The short motif at Thr126 to Gln154 is the Q motif element. A Helicase ATP-binding domain is found at Lys158–Leu343. Position 171 to 178 (Ala171 to Thr178) interacts with ATP. The DEAD box motif lies at Asp284–Asp287. Residues Asn372–Ser528 form the Helicase C-terminal domain.

The protein belongs to the DEAD box helicase family. DDX18/HAS1 subfamily.

The protein resides in the mitochondrion matrix. It carries out the reaction ATP + H2O = ADP + phosphate + H(+). Functionally, ATP-dependent RNA helicase required for mitochondrial splicing of group I and II introns. Also required for efficient mitochondrial translation. The chain is ATP-dependent RNA helicase MSS116, mitochondrial (MSS116) from Eremothecium gossypii (strain ATCC 10895 / CBS 109.51 / FGSC 9923 / NRRL Y-1056) (Yeast).